Here is a 96-residue protein sequence, read N- to C-terminus: Co-chaperonin GroES 2 (96 aa).

This sequence belongs to the GroES chaperonin family. In terms of assembly, heptamer of 7 subunits arranged in a ring. Interacts with the chaperonin GroEL.

It is found in the cytoplasm. Together with the chaperonin GroEL, plays an essential role in assisting protein folding. The GroEL-GroES system forms a nano-cage that allows encapsulation of the non-native substrate proteins and provides a physical environment optimized to promote and accelerate protein folding. GroES binds to the apical surface of the GroEL ring, thereby capping the opening of the GroEL channel. The chain is Co-chaperonin GroES 2 from Vibrio parahaemolyticus serotype O3:K6 (strain RIMD 2210633).